The chain runs to 38 residues: Photosystem II reaction center protein L (38 aa).

Residues 17–37 (SLYWGLLLIFVLAILFSNYFF) form a helical membrane-spanning segment.

Belongs to the PsbL family. PSII is composed of 1 copy each of membrane proteins PsbA, PsbB, PsbC, PsbD, PsbE, PsbF, PsbH, PsbI, PsbJ, PsbK, PsbL, PsbM, PsbT, PsbX, PsbY, PsbZ, Psb30/Ycf12, at least 3 peripheral proteins of the oxygen-evolving complex and a large number of cofactors. It forms dimeric complexes.

It is found in the plastid. The protein localises to the chloroplast thylakoid membrane. In terms of biological role, one of the components of the core complex of photosystem II (PSII). PSII is a light-driven water:plastoquinone oxidoreductase that uses light energy to abstract electrons from H(2)O, generating O(2) and a proton gradient subsequently used for ATP formation. It consists of a core antenna complex that captures photons, and an electron transfer chain that converts photonic excitation into a charge separation. This subunit is found at the monomer-monomer interface and is required for correct PSII assembly and/or dimerization. The polypeptide is Photosystem II reaction center protein L (Aethionema cordifolium (Lebanon stonecress)).